Consider the following 252-residue polypeptide: Enolase-phosphatase E1 (252 aa).

The Mg(2+) site is built by aspartate 14 and glutamate 16. Residues 143–144 and lysine 177 contribute to the substrate site; that span reads SS. Aspartate 202 is a binding site for Mg(2+).

This sequence belongs to the HAD-like hydrolase superfamily. MasA/MtnC family. As to quaternary structure, monomer. Requires Mg(2+) as cofactor.

The protein resides in the cytoplasm. It is found in the nucleus. The catalysed reaction is 5-methylsulfanyl-2,3-dioxopentyl phosphate + H2O = 1,2-dihydroxy-5-(methylsulfanyl)pent-1-en-3-one + phosphate. It functions in the pathway amino-acid biosynthesis; L-methionine biosynthesis via salvage pathway; L-methionine from S-methyl-5-thio-alpha-D-ribose 1-phosphate: step 3/6. Its pathway is amino-acid biosynthesis; L-methionine biosynthesis via salvage pathway; L-methionine from S-methyl-5-thio-alpha-D-ribose 1-phosphate: step 4/6. In terms of biological role, bifunctional enzyme that catalyzes the enolization of 2,3-diketo-5-methylthiopentyl-1-phosphate (DK-MTP-1-P) into the intermediate 2-hydroxy-3-keto-5-methylthiopentenyl-1-phosphate (HK-MTPenyl-1-P), which is then dephosphorylated to form the acireductone 1,2-dihydroxy-3-keto-5-methylthiopentene (DHK-MTPene). This chain is Enolase-phosphatase E1, found in Drosophila pseudoobscura pseudoobscura (Fruit fly).